The chain runs to 361 residues: Peptide chain release factor 1 (361 aa).

Gln235 carries the N5-methylglutamine modification. The segment at 286–305 (IDSARSAERKQKVGSGDRSE) is disordered.

It belongs to the prokaryotic/mitochondrial release factor family. Post-translationally, methylated by PrmC. Methylation increases the termination efficiency of RF1.

The protein localises to the cytoplasm. Peptide chain release factor 1 directs the termination of translation in response to the peptide chain termination codons UAG and UAA. The protein is Peptide chain release factor 1 of Rhodopseudomonas palustris (strain HaA2).